Consider the following 396-residue polypeptide: Probable porphobilinogen deaminase (396 aa).

A disordered region spans residues 159-224 (APALHREHER…DTASSSEFEQ (66 aa)). The interval 159-245 (APALHREHER…LQQSAMERDP (87 aa)) is insert. Residues 162 to 189 (LHREHERRTEAEKEAQSRDAREQRRGDY) show a composition bias toward basic and acidic residues. The segment covering 200–215 (LDTEDGEEGAADDGDD) has biased composition (acidic residues). S-(dipyrrolylmethanemethyl)cysteine is present on C328.

It belongs to the HMBS family. Requires dipyrromethane as cofactor.

The enzyme catalyses 4 porphobilinogen + H2O = hydroxymethylbilane + 4 NH4(+). It functions in the pathway porphyrin-containing compound metabolism; protoporphyrin-IX biosynthesis; coproporphyrinogen-III from 5-aminolevulinate: step 2/4. Its function is as follows. Tetrapolymerization of the monopyrrole PBG into the hydroxymethylbilane pre-uroporphyrinogen in several discrete steps. This chain is Probable porphobilinogen deaminase (hemC), found in Halobacterium salinarum (strain ATCC 700922 / JCM 11081 / NRC-1) (Halobacterium halobium).